Here is a 500-residue protein sequence, read N- to C-terminus: Probable cytosol aminopeptidase (500 aa).

Mn(2+)-binding residues include lysine 268 and aspartate 273. Lysine 280 is a catalytic residue. Positions 291, 350, and 352 each coordinate Mn(2+). Arginine 354 is a catalytic residue.

Belongs to the peptidase M17 family. Mn(2+) serves as cofactor.

It localises to the cytoplasm. It carries out the reaction Release of an N-terminal amino acid, Xaa-|-Yaa-, in which Xaa is preferably Leu, but may be other amino acids including Pro although not Arg or Lys, and Yaa may be Pro. Amino acid amides and methyl esters are also readily hydrolyzed, but rates on arylamides are exceedingly low.. The enzyme catalyses Release of an N-terminal amino acid, preferentially leucine, but not glutamic or aspartic acids.. In terms of biological role, presumably involved in the processing and regular turnover of intracellular proteins. Catalyzes the removal of unsubstituted N-terminal amino acids from various peptides. This Aromatoleum aromaticum (strain DSM 19018 / LMG 30748 / EbN1) (Azoarcus sp. (strain EbN1)) protein is Probable cytosol aminopeptidase.